The following is a 20-amino-acid chain: QQRFPQRYVQLVITVDHVMN.

The Peptidase M12B domain maps to 7–20 (RYVQLVITVDHVMN).

The cofactor is Zn(2+).

It localises to the secreted. Functionally, hydrolyzes alpha and beta chains of human fibrinogen and human fibrin. No activity against the gamma chain of human fibrinogen, human thrombin, bovine serum albumin, ovalbumin and hemoglobin. Has anticoagulant activity on human plasma and protects mice against death due from experimentally induced platelet thromboembolism with an ED(50) of 40 ug/kg. In Ganoderma lucidum (Ling zhi medicinal fungus), this protein is Fibrinolytic zinc metalloproteinase.